A 339-amino-acid polypeptide reads, in one-letter code: Transcription factor IIIA (339 aa).

C2H2-type zinc fingers lie at residues 13–37 (YICS…LCKH), 43–67 (FPCK…SITH), 73–98 (FKCD…NRFH), 105–129 (YVCH…QFTH), 135–159 (YKCP…EKVH), 162–188 (YPCK…KECH), 192–214 (VMCD…KKTH), 221–246 (YCCP…QSFH), and 252–276 (FACE…SVVH). 2 stretches are compositionally biased toward basic and acidic residues: residues 275–288 (VHDP…EKCP) and 305–316 (KSKEKSAAKATE). Residues 275–339 (VHDPEKRKLK…ETKGSLVIEK (65 aa)) form a disordered region.

In terms of tissue distribution, synthesized in oocytes and, in much lower levels, in somatic cells.

The protein localises to the nucleus. Functionally, involved in ribosomal large subunit biogenesis. Interacts with the internal control region (ICR) of approximately 50 bases within the 5S RNA genes, is required for correct transcription of these genes by RNA polymerase III. Also binds the transcribed 5S RNA's. The sequence is that of Transcription factor IIIA (gtf3a) from Xenopus borealis (Kenyan clawed frog).